Reading from the N-terminus, the 442-residue chain is Mimosinase, chloroplastic (442 aa).

The N-terminal 35 residues, 1–35 (MALPSAFLNPFVPSPVTANPRTKFARVGKGFNVSC), are a transit peptide targeting the chloroplast. Pyridoxal 5'-phosphate-binding residues include tyrosine 103, arginine 105, glycine 133, methionine 134, serine 252, and threonine 254. Lysine 255 bears the N6-(pyridoxal phosphate)lysine mark.

Belongs to the trans-sulfuration enzymes family. As to quaternary structure, forms homodimers. May form homotetramers from two homodimers. The cofactor is pyridoxal 5'-phosphate.

The protein localises to the plastid. Its subcellular location is the chloroplast. The catalysed reaction is L-mimosine + H2O = 3-hydroxy-4H-pyrid-4-one + pyruvate + NH4(+). It catalyses the reaction L,L-cystathionine + H2O = L-homocysteine + pyruvate + NH4(+). The enzyme catalyses an S-substituted L-cysteine + H2O = a thiol + pyruvate + NH4(+). In terms of biological role, catalyzes the degradation of mimosine, which is a toxic secondary metabolite found in all Mimosa and Leucaena species. Catalyzes the degradation of cystathionine, but seems to have lower preference toward cystathionine over mimosine. The protein is Mimosinase, chloroplastic of Mimosa pudica (Sensitive plant).